A 163-amino-acid chain; its full sequence is UPF0260 protein GOX1406 (163 aa).

The protein belongs to the UPF0260 family.

This is UPF0260 protein GOX1406 from Gluconobacter oxydans (strain 621H) (Gluconobacter suboxydans).